A 470-amino-acid polypeptide reads, in one-letter code: Glutamate--tRNA ligase (470 aa).

The 'HIGH' region signature appears at Pro-12–Gly-22. Zn(2+) contacts are provided by Cys-103, Cys-105, Cys-125, and Asp-127. The 'KMSKS' region signature appears at Lys-236–Arg-240. Lys-239 contacts ATP.

Belongs to the class-I aminoacyl-tRNA synthetase family. Glutamate--tRNA ligase type 1 subfamily. As to quaternary structure, monomer. Requires Zn(2+) as cofactor.

Its subcellular location is the cytoplasm. The catalysed reaction is tRNA(Glu) + L-glutamate + ATP = L-glutamyl-tRNA(Glu) + AMP + diphosphate. Its function is as follows. Catalyzes the attachment of glutamate to tRNA(Glu) in a two-step reaction: glutamate is first activated by ATP to form Glu-AMP and then transferred to the acceptor end of tRNA(Glu). The sequence is that of Glutamate--tRNA ligase from Frankia alni (strain DSM 45986 / CECT 9034 / ACN14a).